A 335-amino-acid chain; its full sequence is Mitochondrial thiamine diphosphate carrier 1 (335 aa).

A run of 6 helical transmembrane segments spans residues 13 to 29, 88 to 105, 127 to 150, 182 to 199, 231 to 247, and 304 to 323; these read KRAVIDASAGGVAGAIS, VPALLMVVPYTSIQFAVL, YLSYISGALAGCAATVGSYPFDLL, LYAGLSPTLIEIIPYAGL, SLSSFQLFLCGLASGTV, and GIVPSTIKAAPAGAVTFVAY. Solcar repeat units lie at residues 13-111, 124-210, and 232-329; these read KRAV…VKSF, LSPY…FKRW, and LSSF…ASDW.

It belongs to the mitochondrial carrier (TC 2.A.29) family.

It is found in the mitochondrion inner membrane. In terms of biological role, mitochondrial transporter that mediates uptake of thiamine diphosphate (ThDP) into mitochondria. This chain is Mitochondrial thiamine diphosphate carrier 1, found in Arabidopsis thaliana (Mouse-ear cress).